The sequence spans 431 residues: MASTGVSVIVVGLGLAGLTTAIECHQKGHSVIALERSKDLNYVGKIIDDTVMIDNNAGVIVSKWGNGAVGQALNAWKFNNTQASVYDTTGKQVQTIEVRKPSSNKYLILRRELTKIVYDHAKTLGIDMRFGTEISDYWEESDQAGVSANGQKLQADCIIWADGVNSKGRDSVAGSSLKPTHSGYAHIRGRADIASLKGNPDAQWILQGAGEVDQMIFVPGPTACLTIVTCGGGRNVAFSNMYKVESPNSAKTSSTPATAQDFLKPIQSWPFKANIEAVVQAAPSGSLVDEPVLQLGQLPSWVSPQGRMILIGDASHPSALNSPIGESLVIEDAAVVAICLELAGKGNVPLALRVAEKIRYVKQSNNNKNIPRASALQHNVEQPDQGINMYPEVPLRDWVSEHNSQEHAYEEYDKVVKAIRGGKEYVATNIS.

A signal peptide spans 1 to 21 (MASTGVSVIVVGLGLAGLTTA). 2 residues coordinate FAD: Glu-35 and Arg-110. Residue Arg-188 is part of the active site. Position 313 (Asp-313) interacts with FAD.

This sequence belongs to the paxM FAD-dependent monooxygenase family. It depends on FAD as a cofactor.

The protein operates within secondary metabolite biosynthesis. In terms of biological role, FAD-dependent monooxygenase; part of the gene cluster that mediates the biosynthesis of the indole diterpenes nodulisporic acids (NA). Nodulisporic acid A (NAA) and its chemically modified derivatives are of particular significance because of their highly potent insecticidal activity against blood-feeding arthropods and lack of observable adverse effects on mammals, in particular the tremogenicity associated with the paspaline-derived IDTs is not observed. The geranylgeranyl diphosphate (GGPP) synthase ggs1, localized outside of the cluster, is proposed to catalyze the first step in nodulisporic acid biosynthesis via conversion of farnesyl pyrophosphate and isopentyl pyrophosphate into geranylgeranyl pyrophosphate (GGPP). Condensation of indole-3-glycerol phosphate with GGPP by the prenyl transferase nodC then forms 3-geranylgeranylindole (3-GGI). Epoxidation by the FAD-dependent monooxygenase nodM leads to a single-epoxidized-GGI that is substrate of the terpene cyclase nodB for cyclization to yield emindole SB. The terminal methyl carbon, C28, of emindole SB is then oxidized by the cytochrome P450 monooxygenase nodW to produce nodulisporic acid F (NAF), the pentacyclic core of NAA. NAF is converted to nodulisporic acid E (NAE) via prenylation. This step is probably performed by one of the indole diterpene prenyltransferases nodD1 or nodD2. Several oxidation steps performed by the FAD-linked oxidoreductase nodO and one of the cytochrome P450 monooxygenase nodR, nodX or nodZ further convert NAE to nodulisporic acid D (NAD). NAD is substrate of cytochrome P450 monooxygenase nodJ to produce the precursor of nodulisporic acid C (NAC), converted to NAC by one of the indole diterpene prenyltransferases nodD1 or nodD2. The FAD-dependent monooxygenase nodY2 then oxidizes NAC to nodulisporic acid B (NAB). Finally NAB is converted to NAA by one of the cytochrome P450 monooxygenases nodR, nodX or nodZ. This is FAD-dependent monooxygenase nodY1 from Hypoxylon pulicicidum.